Reading from the N-terminus, the 476-residue chain is Carbamoyl phosphate synthase arginine-specific small chain (476 aa).

The transit peptide at 1-24 directs the protein to the mitochondrion; it reads MFSHLLKPAARSAGLLGHVNRRYL. Residues 228-415 enclose the Glutamine amidotransferase type-1 domain; the sequence is HVALIDCGVK…IQNVQRYKDH (188 aa). Catalysis depends on Cys304, which acts as the Nucleophile. Active-site residues include His388 and Glu390.

The protein belongs to the CarA family. As to quaternary structure, heterodimer composed of 2 chains; the small (or glutamine) chain promotes the hydrolysis of glutamine to ammonia, which is used by the large (or ammonia) chain to synthesize carbamoyl phosphate.

It localises to the mitochondrion matrix. It carries out the reaction hydrogencarbonate + L-glutamine + 2 ATP + H2O = carbamoyl phosphate + L-glutamate + 2 ADP + phosphate + 2 H(+). It catalyses the reaction L-glutamine + H2O = L-glutamate + NH4(+). Its pathway is amino-acid biosynthesis; L-arginine biosynthesis; carbamoyl phosphate from bicarbonate: step 1/1. Small subunit of the arginine-specific carbamoyl phosphate synthase (CPSase). CPSase catalyzes the formation of carbamoyl phosphate from the ammonia moiety of glutamine, carbonate, and phosphate donated by ATP, the first step of the arginine biosynthetic pathway. The small subunit (glutamine amidotransferase) binds and cleaves glutamine to supply the large subunit with the substrate ammonia. The chain is Carbamoyl phosphate synthase arginine-specific small chain (CPA1) from Phaeosphaeria nodorum (strain SN15 / ATCC MYA-4574 / FGSC 10173) (Glume blotch fungus).